The primary structure comprises 102 residues: Guanyl-specific ribonuclease Pc (102 aa).

Intrachain disulfides connect C2-C10 and C6-C101. The active site involves H38. The active-site Proton acceptor is the E56. H90 acts as the Proton donor in catalysis.

It belongs to the ribonuclease N1/T1 family.

The enzyme catalyses [RNA] containing guanosine + H2O = an [RNA fragment]-3'-guanosine-3'-phosphate + a 5'-hydroxy-ribonucleotide-3'-[RNA fragment].. This chain is Guanyl-specific ribonuclease Pc, found in Penicillium chrysogenum (Penicillium notatum).